Here is a 201-residue protein sequence, read N- to C-terminus: Orotidine 5'-phosphate decarboxylase (201 aa).

Substrate contacts are provided by residues D8, K26, 52–61 (DLKFCDIPST), T106, R153, Q161, G180, and R181. Residue K54 is the Proton donor of the active site.

It belongs to the OMP decarboxylase family. Type 1 subfamily. Homodimer.

It catalyses the reaction orotidine 5'-phosphate + H(+) = UMP + CO2. It functions in the pathway pyrimidine metabolism; UMP biosynthesis via de novo pathway; UMP from orotate: step 2/2. Functionally, catalyzes the decarboxylation of orotidine 5'-monophosphate (OMP) to uridine 5'-monophosphate (UMP). In Thermotoga maritima (strain ATCC 43589 / DSM 3109 / JCM 10099 / NBRC 100826 / MSB8), this protein is Orotidine 5'-phosphate decarboxylase (pyrF).